The primary structure comprises 216 residues: FGFR1 oncogene partner 2 homolog (216 aa).

2 coiled-coil regions span residues 33–102 (TTTL…LIMS) and 131–185 (SKEL…ITRA). Positions 193-216 (EDAAESSSHSASSVPNTDLSLRKS) are disordered. Polar residues predominate over residues 206–216 (VPNTDLSLRKS).

This sequence belongs to the SIKE family.

Its subcellular location is the cytoplasm. The chain is FGFR1 oncogene partner 2 homolog (fgfr1op2) from Xenopus tropicalis (Western clawed frog).